The chain runs to 490 residues: Betaine aldehyde dehydrogenase (490 aa).

K(+) is bound by residues T26, I27, and D93. 150 to 152 provides a ligand contact to NAD(+); sequence GAW. Catalysis depends on K162, which acts as the Charge relay system. 176–179 lines the NAD(+) pocket; the sequence is KPSE. V180 serves as a coordination point for K(+). NAD(+) is bound at residue 230 to 233; that stretch reads GVAS. L246 is a binding site for K(+). E252 (proton acceptor) is an active-site residue. The NAD(+) site is built by G254, C286, and E387. The Nucleophile role is filled by C286. C286 bears the Cysteine sulfenic acid (-SOH) mark. Residues K457 and G460 each coordinate K(+). Residue E464 is the Charge relay system of the active site.

It belongs to the aldehyde dehydrogenase family. Dimer of dimers. K(+) serves as cofactor.

The catalysed reaction is betaine aldehyde + NAD(+) + H2O = glycine betaine + NADH + 2 H(+). The protein operates within amine and polyamine biosynthesis; betaine biosynthesis via choline pathway; betaine from betaine aldehyde: step 1/1. In terms of biological role, involved in the biosynthesis of the osmoprotectant glycine betaine. Catalyzes the irreversible oxidation of betaine aldehyde to the corresponding acid. In Escherichia coli O157:H7, this protein is Betaine aldehyde dehydrogenase.